A 427-amino-acid polypeptide reads, in one-letter code: MSAIVDIIGREILDSRGNPTVECDVLLESGTMGRAAVPSGASTGSREAIELRDGEAGRYNGKGVLKAVEHINTEISEAIMGLDASEQAFLDKTLLELDGTDNKSRLGANAMLAVSMAVAKAAAEEAGLPLYRYFGGSGAMQLPVPMMNIVNGGAHANNSLDIQEFMIVPVSQPTFREALRCGAEVFHALKKILSDRGMSTAVGDEGGFAPNFGSNDECLSTILQAIEKAGYRAGEDVLLALDCAASEFYHDGKYQLAGEGLQLSSAEFTDYLATLADKFPIVSIEDGMHEGDWDGWKLLTERLGKKVQLVGDDLFVTNTRILKEGIEKGIANSILIKINQIGTLTETFAAIEMAKRAGYTAVISHRSGETEDSTIADIAVGLNAGQIKTGSLSRSDRISKYNQLLRIEEDLGDIASYPGKSAFYNLR.

Gln163 is a binding site for (2R)-2-phosphoglycerate. Glu205 acts as the Proton donor in catalysis. Mg(2+) contacts are provided by Asp242, Glu285, and Asp312. 4 residues coordinate (2R)-2-phosphoglycerate: Lys337, Arg366, Ser367, and Lys388. Lys337 (proton acceptor) is an active-site residue.

Belongs to the enolase family. Requires Mg(2+) as cofactor.

It is found in the cytoplasm. Its subcellular location is the secreted. The protein localises to the cell surface. The enzyme catalyses (2R)-2-phosphoglycerate = phosphoenolpyruvate + H2O. Its pathway is carbohydrate degradation; glycolysis; pyruvate from D-glyceraldehyde 3-phosphate: step 4/5. In terms of biological role, catalyzes the reversible conversion of 2-phosphoglycerate (2-PG) into phosphoenolpyruvate (PEP). It is essential for the degradation of carbohydrates via glycolysis. The sequence is that of Enolase from Burkholderia vietnamiensis (strain G4 / LMG 22486) (Burkholderia cepacia (strain R1808)).